Reading from the N-terminus, the 257-residue chain is Neurotrophin-3 (257 aa).

The signal sequence occupies residues 1-18 (MSILFYMIFLAYLRGIQG). A propeptide spanning residues 19–138 (NSMDQRRLPE…VANRTARRKR (120 aa)) is cleaved from the precursor. A disordered region spans residues 61–81 (STLPKAEAPREPERGEPAKSE). Residues 67–79 (EAPREPERGEPAK) show a composition bias toward basic and acidic residues. N131 is a glycosylation site (N-linked (GlcNAc...) asparagine). Intrachain disulfides connect C152–C217, C195–C246, and C205–C248.

Belongs to the NGF-beta family.

Its subcellular location is the secreted. Seems to promote the survival of visceral and proprioceptive sensory neurons. In Sus scrofa (Pig), this protein is Neurotrophin-3 (NTF3).